The primary structure comprises 122 residues: Large ribosomal subunit protein uL24 (122 aa).

The protein belongs to the universal ribosomal protein uL24 family. Part of the 50S ribosomal subunit.

One of two assembly initiator proteins, it binds directly to the 5'-end of the 23S rRNA, where it nucleates assembly of the 50S subunit. Its function is as follows. One of the proteins that surrounds the polypeptide exit tunnel on the outside of the subunit. The sequence is that of Large ribosomal subunit protein uL24 from Renibacterium salmoninarum (strain ATCC 33209 / DSM 20767 / JCM 11484 / NBRC 15589 / NCIMB 2235).